Here is a 577-residue protein sequence, read N- to C-terminus: Arginine--tRNA ligase (577 aa).

Residues 122–132 carry the 'HIGH' region motif; sequence PNVAKEMHVGH.

It belongs to the class-I aminoacyl-tRNA synthetase family. As to quaternary structure, monomer.

It is found in the cytoplasm. It carries out the reaction tRNA(Arg) + L-arginine + ATP = L-arginyl-tRNA(Arg) + AMP + diphosphate. In Citrobacter koseri (strain ATCC BAA-895 / CDC 4225-83 / SGSC4696), this protein is Arginine--tRNA ligase.